The chain runs to 262 residues: Acyl-coenzyme A diphosphatase FITM2 (262 aa).

The Cytoplasmic segment spans residues 1–23 (MEHLERCEWLLRGTLVRAAVRRY). The helical transmembrane segment at 24-44 (LPWALVASMLAGSLLKELSPL) threads the bilayer. Residues 45 to 57 (PESYLSNKRNVLN) are Lumenal-facing. A helical transmembrane segment spans residues 58-78 (VYFVKVAWAWTFCLLLPFIAL). The Cytoplasmic segment spans residues 79–93 (TNYHLTGKAGLVLRR). Residues 94-114 (LSTLLVGTAIWYICTSIFSNI) form a helical membrane-spanning segment. Over 115-145 (EHYTGSCYQSPALEGVRKEHQSKQQCHQEGG) the chain is Lumenal. Residues 146–166 (FWHGFDISGHSFLLTFCALMI) form a helical membrane-spanning segment. Residue histidine 155 is part of the active site. The Cytoplasmic portion of the chain corresponds to 167-190 (VEEMSVLHEVKTDRSHCLHTAITT). A helical membrane pass occupies residues 191 to 211 (LVVALGILTFIWVLMFLCTAV). The Lumenal segment spans residues 212–218 (YFHNLSQ). Histidine 214 is a catalytic residue. The chain crosses the membrane as a helical span at residues 219-239 (KVFGTLFGLLSWYGTYGFWYP). Residues 240–262 (KAFSPGLPPQSCSLNLKQDSYKK) lie on the Cytoplasmic side of the membrane.

The protein belongs to the FIT family. FIT2 subfamily. Widely expressed.

The protein localises to the endoplasmic reticulum membrane. The catalysed reaction is an acyl-CoA + H2O = an acyl-4'-phosphopantetheine + adenosine 3',5'-bisphosphate + 2 H(+). It carries out the reaction (9Z)-octadecenoyl-CoA + H2O = S-(9Z-octadecenoyl)-4'-phosphopantetheine + adenosine 3',5'-bisphosphate + 2 H(+). The enzyme catalyses (5Z,8Z,11Z,14Z)-eicosatetraenoyl-CoA + H2O = S-(5Z,8Z,11Z,14Z-eicosatetraenoyl)-4'-phosphopantetheine + adenosine 3',5'-bisphosphate + 2 H(+). It catalyses the reaction hexadecanoyl-CoA + H2O = S-hexadecanoyl-4'-phosphopantetheine + adenosine 3',5'-bisphosphate + 2 H(+). Functionally, fatty acyl-coenzyme A (CoA) diphosphatase that hydrolyzes fatty acyl-CoA to yield acyl-4'-phosphopantetheine and adenosine 3',5'-bisphosphate. Preferentially hydrolyzes unsaturated long-chain acyl-CoA substrates such as oleoyl-CoA/(9Z)-octadecenoyl-CoA and arachidonoyl-CoA/(5Z,8Z,11Z,14Z)-eicosatetraenoyl-CoA in the endoplasmic reticulum (ER) lumen. This catalytic activity is required for maintaining ER structure and for lipid droplets (LDs) biogenesis, which are lipid storage organelles involved in maintaining lipid and energy homeostasis. Directly binds to diacylglycerol (DAGs) and triacylglycerol, which is also important for LD biogenesis. May support directional budding of nacent LDs from the ER into the cytosol by reducing DAG levels at sites of LD formation. Plays a role in the regulation of cell morphology and cytoskeletal organization. The protein is Acyl-coenzyme A diphosphatase FITM2 of Homo sapiens (Human).